The sequence spans 307 residues: Type 2A encapsulin shell protein (307 aa).

This sequence belongs to the encapsulin family. Family 2A subfamily. In terms of assembly, homooligomeric. The encapsulin nanocompartment is formed by 60 subunits; monomers form pentamers which assemble to form shells. There are 12 charged pores where the pentamers meet as well as 3-fold axis channels and dimer channels. The N-terminus is blocked.

It is found in the encapsulin nanocompartment. The protein localises to the cytoplasm. It localises to the cytosol. Its subcellular location is the cell membrane. In terms of biological role, shell component of a type 2A encapsulin nanocompartment. Forms encapsulin nanocompartments about 24 nm in diameter from 60 monomers. Probably encapsulates at least cysteine desulfurase (CyD, AC O32975) and allows passage of cysteine into its interior, probably involved in sulfur metabolism. Expression in M.smegmatis generates a multimeric protein, whereas expression in E.coli does not. The chain is Type 2A encapsulin shell protein from Mycobacterium leprae (strain TN).